The sequence spans 67 residues: MRMFRITACVPSQTRIRTQRELQNTYFTKLVPYDNWFREQQRIMKMGGKIVKVELATGRPGTNAGLA.

The region spanning Met-1–Ala-56 is the CpcD-like domain.

This sequence belongs to the phycobilisome linker protein family.

Its subcellular location is the cellular thylakoid membrane. Rod linker protein, associated with allophycocyanin. Linker polypeptides determine the state of aggregation and the location of the disk-shaped phycobiliprotein units within the phycobilisome and modulate their spectroscopic properties in order to mediate a directed and optimal energy transfer. This chain is Phycobilisome 7.8 kDa linker polypeptide, allophycocyanin-associated, core (apcC), found in Synechocystis sp. (strain PCC 6714) (Aphanocapsa sp. (strain PCC 6714)).